Consider the following 436-residue polypeptide: Serine--tRNA ligase (436 aa).

Position 242 to 244 (242 to 244 (TAE)) interacts with L-serine. 273 to 275 (RSE) is an ATP binding site. Glutamate 296 is an L-serine binding site. 360 to 363 (EISS) is a binding site for ATP. Serine 395 contributes to the L-serine binding site.

The protein belongs to the class-II aminoacyl-tRNA synthetase family. Type-1 seryl-tRNA synthetase subfamily. In terms of assembly, homodimer. The tRNA molecule binds across the dimer.

Its subcellular location is the cytoplasm. It catalyses the reaction tRNA(Ser) + L-serine + ATP = L-seryl-tRNA(Ser) + AMP + diphosphate + H(+). The catalysed reaction is tRNA(Sec) + L-serine + ATP = L-seryl-tRNA(Sec) + AMP + diphosphate + H(+). The protein operates within aminoacyl-tRNA biosynthesis; selenocysteinyl-tRNA(Sec) biosynthesis; L-seryl-tRNA(Sec) from L-serine and tRNA(Sec): step 1/1. In terms of biological role, catalyzes the attachment of serine to tRNA(Ser). Is also able to aminoacylate tRNA(Sec) with serine, to form the misacylated tRNA L-seryl-tRNA(Sec), which will be further converted into selenocysteinyl-tRNA(Sec). The chain is Serine--tRNA ligase from Polynucleobacter necessarius subsp. necessarius (strain STIR1).